The chain runs to 267 residues: 4-hydroxy-tetrahydrodipicolinate reductase (267 aa).

10–15 (GANGRM) serves as a coordination point for NAD(+). Arg37 is an NADP(+) binding site. NAD(+) is bound by residues 98–100 (GTT) and 122–125 (ARNY). His155 (proton donor/acceptor) is an active-site residue. His156 lines the (S)-2,3,4,5-tetrahydrodipicolinate pocket. Catalysis depends on Lys159, which acts as the Proton donor. 165 to 166 (GT) lines the (S)-2,3,4,5-tetrahydrodipicolinate pocket.

It belongs to the DapB family.

The protein localises to the cytoplasm. The enzyme catalyses (S)-2,3,4,5-tetrahydrodipicolinate + NAD(+) + H2O = (2S,4S)-4-hydroxy-2,3,4,5-tetrahydrodipicolinate + NADH + H(+). It carries out the reaction (S)-2,3,4,5-tetrahydrodipicolinate + NADP(+) + H2O = (2S,4S)-4-hydroxy-2,3,4,5-tetrahydrodipicolinate + NADPH + H(+). Its pathway is amino-acid biosynthesis; L-lysine biosynthesis via DAP pathway; (S)-tetrahydrodipicolinate from L-aspartate: step 4/4. Its function is as follows. Catalyzes the conversion of 4-hydroxy-tetrahydrodipicolinate (HTPA) to tetrahydrodipicolinate. This is 4-hydroxy-tetrahydrodipicolinate reductase from Pseudoalteromonas translucida (strain TAC 125).